Consider the following 508-residue polypeptide: Inosine-5'-monophosphate dehydrogenase (508 aa).

CBS domains follow at residues 111–170 (FITD…EITL) and 174–230 (MTTN…PDAS). Residues aspartate 267 and 317–319 (GMG) each bind NAD(+). Residues glycine 319 and glycine 321 each coordinate K(+). Serine 322 serves as a coordination point for IMP. Cysteine 324 provides a ligand contact to K(+). Residue cysteine 324 is the Thioimidate intermediate of the active site. IMP-binding positions include 357–359 (DGG), 380–381 (GF), and 404–408 (YRGMA). Arginine 420 acts as the Proton acceptor in catalysis. An IMP-binding site is contributed by glutamine 432. Position 492 (glycine 492) interacts with K(+).

Belongs to the IMPDH/GMPR family. Homotetramer. K(+) is required as a cofactor.

It carries out the reaction IMP + NAD(+) + H2O = XMP + NADH + H(+). It participates in purine metabolism; XMP biosynthesis via de novo pathway; XMP from IMP: step 1/1. Mycophenolic acid (MPA) is a non-competitive inhibitor that prevents formation of the closed enzyme conformation by binding to the same site as the amobile flap. In contrast, mizoribine monophosphate (MZP) is a competitive inhibitor that induces the closed conformation. MPA is a potent inhibitor of mammalian IMPDHs but a poor inhibitor of the bacterial enzymes. MZP is a more potent inhibitor of bacterial IMPDH. Functionally, catalyzes the conversion of inosine 5'-phosphate (IMP) to xanthosine 5'-phosphate (XMP), the first committed and rate-limiting step in the de novo synthesis of guanine nucleotides, and therefore plays an important role in the regulation of cell growth. The polypeptide is Inosine-5'-monophosphate dehydrogenase (Leptospira interrogans serogroup Icterohaemorrhagiae serovar Lai (strain 56601)).